Here is a 183-residue protein sequence, read N- to C-terminus: Oleosin Bn-V (183 aa).

The segment at 1–47 (PARTHHDITTRDQYPLISRDRDQYGMIGRDQYNMSGQNYSKSRQIAK) is polar. 2 repeats span residues 11 to 20 (RDQYPLISRD) and 21 to 30 (RDQYGMIGRD). Residues 48–119 (ATTAVTAGDS…AAITVFSWIY (72 aa)) are hydrophobic. 2 consecutive transmembrane segments (helical) span residues 57 to 77 (SLLV…IVAT) and 99 to 119 (TGFL…SWIY). The disordered stretch occupies residues 154-183 (YGQQHTGEEHDRDRDHRTDRDRTRGTQHTT). Over residues 159 to 177 (TGEEHDRDRDHRTDRDRTR) the composition is skewed to basic and acidic residues.

It belongs to the oleosin family.

It localises to the lipid droplet. It is found in the membrane. Its function is as follows. May have a structural role to stabilize the lipid body during desiccation of the seed by preventing coalescence of the oil. Probably interacts with both lipid and phospholipid moieties of lipid bodies. May also provide recognition signals for specific lipase anchorage in lipolysis during seedling growth. This chain is Oleosin Bn-V, found in Brassica napus (Rape).